Here is a 194-residue protein sequence, read N- to C-terminus: Phosphoheptose isomerase (194 aa).

The region spanning 34–188 is the SIS domain; that stretch reads LANIFTKGKK…IEGVERIMFP (155 aa). 49 to 51 lines the substrate pocket; the sequence is NGG. Zn(2+)-binding residues include His-58 and Glu-62. Substrate-binding positions include Glu-62, 90-91, 116-118, Ser-121, and Gln-168; these read ND and STS. Residues Gln-168 and His-176 each coordinate Zn(2+).

Belongs to the SIS family. GmhA subfamily. Requires Zn(2+) as cofactor.

It localises to the cytoplasm. It carries out the reaction 2 D-sedoheptulose 7-phosphate = D-glycero-alpha-D-manno-heptose 7-phosphate + D-glycero-beta-D-manno-heptose 7-phosphate. Its pathway is carbohydrate biosynthesis; D-glycero-D-manno-heptose 7-phosphate biosynthesis; D-glycero-alpha-D-manno-heptose 7-phosphate and D-glycero-beta-D-manno-heptose 7-phosphate from sedoheptulose 7-phosphate: step 1/1. In terms of biological role, catalyzes the isomerization of sedoheptulose 7-phosphate in D-glycero-D-manno-heptose 7-phosphate. This chain is Phosphoheptose isomerase, found in Fusobacterium nucleatum subsp. nucleatum (strain ATCC 25586 / DSM 15643 / BCRC 10681 / CIP 101130 / JCM 8532 / KCTC 2640 / LMG 13131 / VPI 4355).